A 189-amino-acid chain; its full sequence is Peptidyl-tRNA hydrolase (189 aa).

Tyr-15 serves as a coordination point for tRNA. His-20 (proton acceptor) is an active-site residue. Residues Phe-66, Asn-68, and Asn-114 each contribute to the tRNA site.

The protein belongs to the PTH family. Monomer.

The protein localises to the cytoplasm. The enzyme catalyses an N-acyl-L-alpha-aminoacyl-tRNA + H2O = an N-acyl-L-amino acid + a tRNA + H(+). In terms of biological role, hydrolyzes ribosome-free peptidyl-tRNAs (with 1 or more amino acids incorporated), which drop off the ribosome during protein synthesis, or as a result of ribosome stalling. Catalyzes the release of premature peptidyl moieties from peptidyl-tRNA molecules trapped in stalled 50S ribosomal subunits, and thus maintains levels of free tRNAs and 50S ribosomes. This Streptococcus thermophilus (strain CNRZ 1066) protein is Peptidyl-tRNA hydrolase.